Reading from the N-terminus, the 83-residue chain is MRFHTLLFLSFLLLVSCALICTAQHPGLEKSGMFHENVGKGQHIEEKRSCIERMQTCGVEAGLPCCSGAPCICPYIGDCICIQ.

An N-terminal signal peptide occupies residues 1-23; the sequence is MRFHTLLFLSFLLLVSCALICTA. Residues 24 to 48 constitute a propeptide that is removed on maturation; the sequence is QHPGLEKSGMFHENVGKGQHIEEKR. Intrachain disulfides connect cysteine 50–cysteine 66, cysteine 57–cysteine 71, and cysteine 65–cysteine 79.

It belongs to the neurotoxin 07 (Beta/delta-agtx) family. 03 (aga-4) subfamily. JZTX sub-subfamily. In terms of tissue distribution, expressed by the venom gland.

It is found in the secreted. Functionally, probable ion channel inhibitor. The chain is U25-theraphotoxin-Cg1b from Chilobrachys guangxiensis (Chinese earth tiger tarantula).